A 150-amino-acid polypeptide reads, in one-letter code: Phosphopantetheine adenylyltransferase (150 aa).

Thr-15 lines the substrate pocket. ATP contacts are provided by residues 15 to 16 (TF) and His-23. 2 residues coordinate substrate: Ile-80 and Arg-94. Residues 95–97 (GIR), Glu-105, and 130–136 (LENISSR) contribute to the ATP site.

Belongs to the bacterial CoaD family. As to quaternary structure, homohexamer. The cofactor is Mg(2+).

It localises to the cytoplasm. It carries out the reaction (R)-4'-phosphopantetheine + ATP + H(+) = 3'-dephospho-CoA + diphosphate. The protein operates within cofactor biosynthesis; coenzyme A biosynthesis; CoA from (R)-pantothenate: step 4/5. Its function is as follows. Reversibly transfers an adenylyl group from ATP to 4'-phosphopantetheine, yielding dephospho-CoA (dPCoA) and pyrophosphate. The protein is Phosphopantetheine adenylyltransferase of Malacoplasma penetrans (strain HF-2) (Mycoplasma penetrans).